A 332-amino-acid chain; its full sequence is tRNA U34 carboxymethyltransferase (332 aa).

Carboxy-S-adenosyl-L-methionine-binding positions include Lys91, Trp105, Lys110, Gly130, 152–154, 181–182, Met196, Tyr200, and Arg315; these read DPS and IE.

This sequence belongs to the class I-like SAM-binding methyltransferase superfamily. CmoB family. In terms of assembly, homotetramer.

It carries out the reaction carboxy-S-adenosyl-L-methionine + 5-hydroxyuridine(34) in tRNA = 5-carboxymethoxyuridine(34) in tRNA + S-adenosyl-L-homocysteine + H(+). Catalyzes carboxymethyl transfer from carboxy-S-adenosyl-L-methionine (Cx-SAM) to 5-hydroxyuridine (ho5U) to form 5-carboxymethoxyuridine (cmo5U) at position 34 in tRNAs. The sequence is that of tRNA U34 carboxymethyltransferase from Shewanella putrefaciens (strain CN-32 / ATCC BAA-453).